A 279-amino-acid chain; its full sequence is Cell death abnormality protein 2 (279 aa).

In terms of domain architecture, SH2 spans 14–115; it reads FYFPGMSREE…EASLLAAYKK (102 aa). In terms of domain architecture, SH3 1 spans 116–176; that stretch reads PIIEVVVGTF…PANYVQIQME (61 aa). The interval 181 to 213 is disordered; it reads RTSKGASQSSIGSSGGGAERFSSASTSSDNIEL. The span at 202–211 shows a compositional bias: polar residues; the sequence is SSASTSSDNI. The SH3 2 domain occupies 214-277; that stretch reads QPRLPAKAKV…PHTYLRFTAV (64 aa).

This sequence belongs to the CRK family. In terms of assembly, interacts with ced-5 (via C-terminus which contains a candidate SH3-binding, proline-rich region). Forms a ternary complex with ced-5 and ced-12. Interacts (via SH2 domain) with src-1 (when activated and phosphorylated at 'Tyr-416').

Its function is as follows. Required for cell migration and engulfment of cell corpses but not for programmed cell death/apoptosis. Has a role in the migration of the 2 gonadal distal tip cells (DTCs). Plays a role in protecting dopaminergic neurons from oxidative stress-induced degeneration. This is Cell death abnormality protein 2 from Caenorhabditis elegans.